The chain runs to 352 residues: Keratocan (352 aa).

Residues 1–20 form the signal peptide; that stretch reads MASTICFILWVVFVTDTVWT. Residues 33-71 form the LRRNT domain; the sequence is EDWTMHDFDCPRECFCPPSFPTALYCENRGLKEIPAIPS. Intrachain disulfides connect C42/C48 and C46/C58. 8 LRR repeats span residues 72–93, 96–117, 122–142, 143–164, 167–180, 193–214, 215–235, and 238–258; these read RIWY…PFEN, QLRW…KGAL, KLLF…PLPR, SLEQ…TFSN, NLTL…KLLD, NLMQ…LPAN, TMQV…YFNV, and KVAF…PSSG. N93 carries N-linked (GlcNAc...) (keratan sulfate) asparagine glycosylation. An N-linked (GlcNAc...) (keratan sulfate) asparagine glycan is attached at N167. The N-linked (GlcNAc...) asparagine glycan is linked to N222. N-linked (GlcNAc...) (keratan sulfate) asparagine glycosylation occurs at N260. LRR repeat units follow at residues 263–282 and 283–304; these read SILD…KISA and HLQH…VICP. N-linked (GlcNAc...) asparagine glycosylation occurs at N298. A disulfide bridge links C303 with C343.

It belongs to the small leucine-rich proteoglycan (SLRP) family. SLRP class II subfamily. Binds three long, highly sulfated keratan sulfate chains in the cornea but short, non-sulfated poly(N-acetyllactosamine) chains in other tissues. Post-translationally, the N-terminus is blocked. Abundant in cornea and sclera but also found in other tissues.

Its subcellular location is the secreted. It is found in the extracellular space. The protein localises to the extracellular matrix. Functionally, may be important in developing and maintaining corneal transparency and for the structure of the stromal matrix. The protein is Keratocan (KERA) of Bos taurus (Bovine).